The primary structure comprises 506 residues: 2,3-bisphosphoglycerate-independent phosphoglycerate mutase (506 aa).

2 residues coordinate Mn(2+): Asp13 and Ser63. Catalysis depends on Ser63, which acts as the Phosphoserine intermediate. Substrate is bound by residues His124, 153–154, Arg183, Arg189, 254–257, and Lys330; these read RD and RADR. Asp396, His400, Asp437, His438, and His456 together coordinate Mn(2+).

It belongs to the BPG-independent phosphoglycerate mutase family. Monomer. Mn(2+) serves as cofactor.

The catalysed reaction is (2R)-2-phosphoglycerate = (2R)-3-phosphoglycerate. It functions in the pathway carbohydrate degradation; glycolysis; pyruvate from D-glyceraldehyde 3-phosphate: step 3/5. Its function is as follows. Catalyzes the interconversion of 2-phosphoglycerate and 3-phosphoglycerate. This chain is 2,3-bisphosphoglycerate-independent phosphoglycerate mutase, found in Cereibacter sphaeroides (strain ATCC 17025 / ATH 2.4.3) (Rhodobacter sphaeroides).